The primary structure comprises 425 residues: MAEIMHVFAREIMDSRGNPTVEAEVFLDDGSHGVAGVPSGASTGVHEAHELRDGGDRYLGKGVLKAVENVNEEIGDELAGLEADDQRLIDAAMIKLDGTENKSRLGANAILGVSMAVAKAAADSAGLPLFRYIGGPNAHVLPVPMMNIINGGAHADSGVDVQEFMIAPIGFDSFSEALRAGAEVYHALKKVINEKGLSTGLGDEGGFAPSVESTRAALDLIVEAIKKAGFEPGKDIALALDVASSEFFKDGKYHFEGGEHTAEEMANVYAELVDEYPIVSIEDPLQEDDWDGYVALTAQIGDKVQIVGDDFFVTNPARLKEGIAKKAANSILVKVNQIGTLTETFDAVDMAHRAGYTSMMSHRSGETEDTTIADLAVALNCGQIKTGAPARSDRVAKYNQLLRIEQLLGDAAVYAGRSAFPRFQG.

Gln162 contributes to the (2R)-2-phosphoglycerate binding site. Residue Glu204 is the Proton donor of the active site. Residues Asp241, Glu282, and Asp309 each coordinate Mg(2+). The (2R)-2-phosphoglycerate site is built by Lys334, Arg363, Ser364, and Lys385. The active-site Proton acceptor is the Lys334.

It belongs to the enolase family. Requires Mg(2+) as cofactor.

It is found in the cytoplasm. The protein localises to the secreted. Its subcellular location is the cell surface. It carries out the reaction (2R)-2-phosphoglycerate = phosphoenolpyruvate + H2O. Its pathway is carbohydrate degradation; glycolysis; pyruvate from D-glyceraldehyde 3-phosphate: step 4/5. In terms of biological role, catalyzes the reversible conversion of 2-phosphoglycerate (2-PG) into phosphoenolpyruvate (PEP). It is essential for the degradation of carbohydrates via glycolysis. The chain is Enolase from Corynebacterium efficiens (strain DSM 44549 / YS-314 / AJ 12310 / JCM 11189 / NBRC 100395).